The primary structure comprises 388 residues: Chorismate synthase (388 aa).

NADP(+) contacts are provided by Arg39 and Arg45. Residues 130–132 (RSS), 251–252 (NA), Gly296, 311–315 (KPIPT), and Arg337 contribute to the FMN site.

The protein belongs to the chorismate synthase family. As to quaternary structure, homotetramer. FMNH2 serves as cofactor.

The enzyme catalyses 5-O-(1-carboxyvinyl)-3-phosphoshikimate = chorismate + phosphate. It participates in metabolic intermediate biosynthesis; chorismate biosynthesis; chorismate from D-erythrose 4-phosphate and phosphoenolpyruvate: step 7/7. Functionally, catalyzes the anti-1,4-elimination of the C-3 phosphate and the C-6 proR hydrogen from 5-enolpyruvylshikimate-3-phosphate (EPSP) to yield chorismate, which is the branch point compound that serves as the starting substrate for the three terminal pathways of aromatic amino acid biosynthesis. This reaction introduces a second double bond into the aromatic ring system. This chain is Chorismate synthase, found in Streptococcus suis (strain 98HAH33).